We begin with the raw amino-acid sequence, 349 residues long: Sensory histidine kinase/phosphatase NtrB (349 aa).

Residues I5–D78 form the PAS domain. The Histidine kinase domain occupies G136–K349. Residue H139 is modified to Phosphohistidine; by autocatalysis. K329 provides a ligand contact to ATP.

In terms of processing, autophosphorylated.

It localises to the cytoplasm. It catalyses the reaction ATP + protein L-histidine = ADP + protein N-phospho-L-histidine.. In terms of biological role, member of the two-component regulatory system NtrB/NtrC, which controls expression of the nitrogen-regulated (ntr) genes in response to nitrogen limitation. Under conditions of nitrogen limitation, NtrB autophosphorylates and transfers the phosphoryl group to NtrC. In the presence of nitrogen, acts as a phosphatase that dephosphorylates and inactivates NtrC. The chain is Sensory histidine kinase/phosphatase NtrB (glnL) from Salmonella typhi.